A 445-amino-acid polypeptide reads, in one-letter code: Serine--tRNA ligase (445 aa).

An L-serine-binding site is contributed by 229 to 231; it reads TAE. ATP contacts are provided by residues 260–262 and V276; that span reads RKE. Position 283 (E283) interacts with L-serine. 347-350 lines the ATP pocket; the sequence is EVSS. S383 provides a ligand contact to L-serine.

Belongs to the class-II aminoacyl-tRNA synthetase family. Type-1 seryl-tRNA synthetase subfamily. In terms of assembly, homodimer. The tRNA molecule binds across the dimer.

The protein resides in the cytoplasm. It catalyses the reaction tRNA(Ser) + L-serine + ATP = L-seryl-tRNA(Ser) + AMP + diphosphate + H(+). The enzyme catalyses tRNA(Sec) + L-serine + ATP = L-seryl-tRNA(Sec) + AMP + diphosphate + H(+). The protein operates within aminoacyl-tRNA biosynthesis; selenocysteinyl-tRNA(Sec) biosynthesis; L-seryl-tRNA(Sec) from L-serine and tRNA(Sec): step 1/1. Catalyzes the attachment of serine to tRNA(Ser). Is also able to aminoacylate tRNA(Sec) with serine, to form the misacylated tRNA L-seryl-tRNA(Sec), which will be further converted into selenocysteinyl-tRNA(Sec). This chain is Serine--tRNA ligase, found in Thermomicrobium roseum (strain ATCC 27502 / DSM 5159 / P-2).